The sequence spans 190 residues: Potassium-transporting ATPase KdpC subunit (190 aa).

Residues 10–30 (TFLFLLLITGGVYPLLTTALG) form a helical membrane-spanning segment.

Belongs to the KdpC family. As to quaternary structure, the system is composed of three essential subunits: KdpA, KdpB and KdpC.

Its subcellular location is the cell inner membrane. In terms of biological role, part of the high-affinity ATP-driven potassium transport (or Kdp) system, which catalyzes the hydrolysis of ATP coupled with the electrogenic transport of potassium into the cytoplasm. This subunit acts as a catalytic chaperone that increases the ATP-binding affinity of the ATP-hydrolyzing subunit KdpB by the formation of a transient KdpB/KdpC/ATP ternary complex. The protein is Potassium-transporting ATPase KdpC subunit of Shigella flexneri serotype 5b (strain 8401).